We begin with the raw amino-acid sequence, 437 residues long: Carboxypeptidase A6 (437 aa).

The signal sequence occupies residues 1 to 30; sequence MKCLGKRRGQAAAFLPLCWLFLKILQPGHS. The propeptide at 31 to 129 is activation peptide; it reads HLYNNRYAGD…SSLHTQRNRR (99 aa). Asparagine 89 and asparagine 153 each carry an N-linked (GlcNAc...) asparagine glycan. The region spanning 138-432 is the Peptidase M14 domain; sequence VYHSLEEIQN…LAVKNITMHL (295 aa). Positions 196 and 199 each coordinate Zn(2+). Substrate is bound by residues 196–199, arginine 254, and 271–272; these read HARE and NR. A disulfide bridge links cysteine 265 with cysteine 288. Histidine 324 is a binding site for Zn(2+). Substrate-binding positions include 325–326 and tyrosine 376; that span reads AY. Catalysis depends on glutamate 398, which acts as the Proton donor/acceptor. A glycan (N-linked (GlcNAc...) asparagine) is linked at asparagine 427.

This sequence belongs to the peptidase M14 family. The cofactor is Zn(2+). In terms of tissue distribution, expressed in the hippocampus, nucleus raphe, and cortex.

Its subcellular location is the secreted. It is found in the extracellular space. The protein localises to the extracellular matrix. In terms of biological role, may be involved in the proteolytic inactivation of enkephalins and neurotensin in some brain areas. May convert inactive angiotensin I into the biologically active angiotensin II. Releases a C-terminal amino acid, with preference for large hydrophobic C-terminal amino acids and shows only very weak activity toward small amino acids and histidine. This chain is Carboxypeptidase A6 (CPA6), found in Homo sapiens (Human).